We begin with the raw amino-acid sequence, 240 residues long: 1-(5-phosphoribosyl)-5-[(5-phosphoribosylamino)methylideneamino] imidazole-4-carboxamide isomerase (240 aa).

The active-site Proton acceptor is the Asp10. The active-site Proton donor is the Asp132.

It belongs to the HisA/HisF family.

The protein localises to the cytoplasm. It carries out the reaction 1-(5-phospho-beta-D-ribosyl)-5-[(5-phospho-beta-D-ribosylamino)methylideneamino]imidazole-4-carboxamide = 5-[(5-phospho-1-deoxy-D-ribulos-1-ylimino)methylamino]-1-(5-phospho-beta-D-ribosyl)imidazole-4-carboxamide. Its pathway is amino-acid biosynthesis; L-histidine biosynthesis; L-histidine from 5-phospho-alpha-D-ribose 1-diphosphate: step 4/9. In Methanocella arvoryzae (strain DSM 22066 / NBRC 105507 / MRE50), this protein is 1-(5-phosphoribosyl)-5-[(5-phosphoribosylamino)methylideneamino] imidazole-4-carboxamide isomerase.